The primary structure comprises 188 residues: UPF0340 protein SSU98_0310 (188 aa).

Belongs to the UPF0340 family.

The sequence is that of UPF0340 protein SSU98_0310 from Streptococcus suis (strain 98HAH33).